Reading from the N-terminus, the 122-residue chain is Large ribosomal subunit protein uL14c (122 aa).

Belongs to the universal ribosomal protein uL14 family. In terms of assembly, part of the 50S ribosomal subunit.

The protein resides in the plastid. Binds to 23S rRNA. The chain is Large ribosomal subunit protein uL14c from Euglena longa (Euglenophycean alga).